A 436-amino-acid polypeptide reads, in one-letter code: Transcription termination factor Rho (436 aa).

The 76-residue stretch at L65–P140 folds into the Rho RNA-BD domain. Residues G185–G190, K197–V202, and R228 each bind ATP.

It belongs to the Rho family. As to quaternary structure, homohexamer. The homohexamer assembles into an open ring structure.

Functionally, facilitates transcription termination by a mechanism that involves Rho binding to the nascent RNA, activation of Rho's RNA-dependent ATPase activity, and release of the mRNA from the DNA template. The protein is Transcription termination factor Rho of Aquifex aeolicus (strain VF5).